A 986-amino-acid polypeptide reads, in one-letter code: LRR receptor-like serine/threonine-protein kinase ER2 (986 aa).

The N-terminal stretch at 1–21 (MTTTTTTRLLLAAILLAVAAA) is a signal peptide. Residues 22–581 (DDDGQTLLEI…VQRSSVSRSA (560 aa)) are Extracellular-facing. Asn64 and Asn73 each carry an N-linked (GlcNAc...) asparagine glycan. LRR repeat units lie at residues 68-89 (AVAA…AIGN), 90-114 (LKSV…IGDC), 116-138 (SLKT…ISKL), 139-161 (KHLE…TLSQ), 162-186 (LPNL…IYWN), 188-210 (VLQY…MCQL), 211-233 (TGLW…TIGN), 234-259 (CTSF…GFLQ), 261-280 (ATLS…VIGL), 281-304 (MQAL…ILGN), 306-329 (TYTE…LGNM), 330-352 (STLH…ELGK), 354-377 (TGLF…ISSC), 379-401 (NLIS…LHKL), 402-425 (ESIT…LAKM), 427-449 (NLDT…IGSL), 450-472 (EHLL…EFGN), 473-498 (LRSI…GMLQ), 500-520 (LILL…LINC), and 521-545 (FSLN…NFSR). Residues Asn220 and Asn233 are each glycosylated (N-linked (GlcNAc...) asparagine). Asn269, Asn304, and Asn328 each carry an N-linked (GlcNAc...) asparagine glycan. Asn373, Asn391, and Asn408 each carry an N-linked (GlcNAc...) asparagine glycan. A glycan (N-linked (GlcNAc...) asparagine) is linked at Asn456. Residues Asn509, Asn527, and Asn542 are each glycosylated (N-linked (GlcNAc...) asparagine). The chain crosses the membrane as a helical span at residues 582 to 602 (ILGIAVAGLVILLMILAAACW). At 603–986 (PHWAQVPKDV…FGEVISQNTE (384 aa)) the chain is on the cytoplasmic side. Residues 653–934 (LSEKYIIGYG…YPDPPSKPAL (282 aa)) enclose the Protein kinase domain. ATP-binding positions include 659–667 (IGYGASSTV) and Lys681. The Proton acceptor role is filled by Asp779.

It belongs to the protein kinase superfamily. Ser/Thr protein kinase family.

The protein localises to the cell membrane. The catalysed reaction is L-seryl-[protein] + ATP = O-phospho-L-seryl-[protein] + ADP + H(+). It carries out the reaction L-threonyl-[protein] + ATP = O-phospho-L-threonyl-[protein] + ADP + H(+). Its function is as follows. Receptor kinase that may be involved in the regulation of cell proliferation and cell growth. The polypeptide is LRR receptor-like serine/threonine-protein kinase ER2 (Oryza sativa subsp. japonica (Rice)).